Consider the following 758-residue polypeptide: Vitamin K-dependent gamma-carboxylase (758 aa).

The tract at residues Met1–Met34 is disordered. Ala2 is subject to N-acetylalanine. At Ala2 to Asp60 the chain is on the cytoplasmic side. Basic and acidic residues predominate over residues Arg12 to Ala22. A helical transmembrane segment spans residues Pro61 to Gln81. The Lumenal segment spans residues Glu82 to Asp113. Cys99 and Cys450 are joined by a disulfide. A helical membrane pass occupies residues Trp114 to Cys134. At Tyr135–Arg136 the chain is on the cytoplasmic side. Residues Ile137–Trp157 traverse the membrane as a helical segment. Topologically, residues Asn158–Gln292 are lumenal. Residues Leu293 to Pro313 traverse the membrane as a helical segment. At Glu314–Ser363 the chain is on the cytoplasmic side. A helical membrane pass occupies residues Thr364–Thr384. Topologically, residues Gln385 to Phe758 are lumenal. A disordered region spans residues Pro727–Phe758. Residues Pro749–Phe758 are compositionally biased toward basic and acidic residues.

In terms of assembly, monomer. May interact with CALU. In terms of processing, the N-terminus is blocked.

The protein localises to the endoplasmic reticulum membrane. It catalyses the reaction 4-carboxy-L-glutamyl-[protein] + 2,3-epoxyphylloquinone + H2O + H(+) = phylloquinol + L-glutamyl-[protein] + CO2 + O2. In terms of biological role, mediates the vitamin K-dependent carboxylation of glutamate residues to calcium-binding gamma-carboxyglutamate (Gla) residues with the concomitant conversion of the reduced hydroquinone form of vitamin K to vitamin K epoxide. Catalyzes gamma-carboxylation of various proteins, such as blood coagulation factors (F2, F7, F9 and F10), osteocalcin (BGLAP) or matrix Gla protein (MGP). This chain is Vitamin K-dependent gamma-carboxylase (GGCX), found in Bos taurus (Bovine).